Reading from the N-terminus, the 160-residue chain is SsrA-binding protein (160 aa).

Positions 1-23 (MARKKKQDKGQGPKTIAQNRRAR) are disordered.

This sequence belongs to the SmpB family.

It localises to the cytoplasm. Functionally, required for rescue of stalled ribosomes mediated by trans-translation. Binds to transfer-messenger RNA (tmRNA), required for stable association of tmRNA with ribosomes. tmRNA and SmpB together mimic tRNA shape, replacing the anticodon stem-loop with SmpB. tmRNA is encoded by the ssrA gene; the 2 termini fold to resemble tRNA(Ala) and it encodes a 'tag peptide', a short internal open reading frame. During trans-translation Ala-aminoacylated tmRNA acts like a tRNA, entering the A-site of stalled ribosomes, displacing the stalled mRNA. The ribosome then switches to translate the ORF on the tmRNA; the nascent peptide is terminated with the 'tag peptide' encoded by the tmRNA and targeted for degradation. The ribosome is freed to recommence translation, which seems to be the essential function of trans-translation. The polypeptide is SsrA-binding protein (Thermobifida fusca (strain YX)).